The sequence spans 55 residues: ATP synthase F(0) complex subunit 8 (55 aa).

A helical transmembrane segment spans residues 7–24 (APWFSIMIMTWLTLALLI). The segment at 34–55 (TNPPSSKPSLTTKPTPWAWPWT) is disordered.

It belongs to the ATPase protein 8 family. As to quaternary structure, component of the ATP synthase complex composed at least of ATP5F1A/subunit alpha, ATP5F1B/subunit beta, ATP5MC1/subunit c (homooctomer), MT-ATP6/subunit a, MT-ATP8/subunit 8, ATP5ME/subunit e, ATP5MF/subunit f, ATP5MG/subunit g, ATP5MK/subunit k, ATP5MJ/subunit j, ATP5F1C/subunit gamma, ATP5F1D/subunit delta, ATP5F1E/subunit epsilon, ATP5PF/subunit F6, ATP5PB/subunit b, ATP5PD/subunit d, ATP5PO/subunit OSCP. ATP synthase complex consists of a soluble F(1) head domain (subunits alpha(3) and beta(3)) - the catalytic core - and a membrane F(0) domain - the membrane proton channel (subunits c, a, 8, e, f, g, k and j). These two domains are linked by a central stalk (subunits gamma, delta, and epsilon) rotating inside the F1 region and a stationary peripheral stalk (subunits F6, b, d, and OSCP).

The protein resides in the mitochondrion membrane. Subunit 8, of the mitochondrial membrane ATP synthase complex (F(1)F(0) ATP synthase or Complex V) that produces ATP from ADP in the presence of a proton gradient across the membrane which is generated by electron transport complexes of the respiratory chain. ATP synthase complex consist of a soluble F(1) head domain - the catalytic core - and a membrane F(1) domain - the membrane proton channel. These two domains are linked by a central stalk rotating inside the F(1) region and a stationary peripheral stalk. During catalysis, ATP synthesis in the catalytic domain of F(1) is coupled via a rotary mechanism of the central stalk subunits to proton translocation. In vivo, can only synthesize ATP although its ATP hydrolase activity can be activated artificially in vitro. Part of the complex F(0) domain. This chain is ATP synthase F(0) complex subunit 8, found in Aythya americana (Redhead).